The sequence spans 483 residues: Probable 4-hydroxyphenylacetate 3-monooxygenase (483 aa).

Residues 104 to 108 (RSPDY) and His150 each bind substrate. FAD-binding positions include 150 to 152 (HTF), 156 to 159 (QVNR), and Thr193. Residue 206 to 207 (AP) coordinates substrate. 452–455 (DPIR) provides a ligand contact to FAD.

The protein belongs to the FADH(2)-utilizing monooxygenase family.

It carries out the reaction 4-hydroxyphenylacetate + FADH2 + O2 = 3,4-dihydroxyphenylacetate + FAD + H2O + H(+). The protein operates within aromatic compound metabolism; 4-hydroxyphenylacetate degradation; pyruvate and succinate semialdehyde from 4-hydroxyphenylacetate: step 1/7. In terms of biological role, catalyzes the hydroxylation of 4-hydroxyphenylacetic acid (4HPA), leading to the production of 3,4-dihydroxyphenylacetic acid (DHPA). The polypeptide is Probable 4-hydroxyphenylacetate 3-monooxygenase (yoaI) (Bacillus subtilis (strain 168)).